A 103-amino-acid polypeptide reads, in one-letter code: Large ribosomal subunit protein bL32m (103 aa).

The transit peptide at 1 to 47 (MALLRGNSLAISQKMLSVFQASALPHISLRIFISPPSIANIWNSILL) directs the protein to the mitochondrion. Zn(2+)-binding residues include Cys77, Cys80, Cys90, and Cys93.

It belongs to the bacterial ribosomal protein bL32 family. In terms of assembly, component of the mitochondrial large ribosomal subunit (mt-LSU). Mature yeast 74S mitochondrial ribosomes consist of a small (37S) and a large (54S) subunit. The 37S small subunit contains a 15S ribosomal RNA (15S mt-rRNA) and at least 32 different proteins. The 54S large subunit contains a 21S rRNA (21S mt-rRNA) and at least 45 different proteins. bL32m has a zinc binding site. MRPL32 precursor is processed by the m-AAA protease, which cleaves the N-terminal transit peptide. Cleavage by the m-AAA protease takes place prior to assembly into the large subunit, an essential step for mitochondrial ribosome (mitoribosome) assembly. Proper processing by the m-AAA protease is dependent on the zinc-binding region within the tightly folded C-terminal domain of MRPL32: zinc-dependent folding halts degradation initiated from the N-terminus and triggers the release of mature mrpl32.

It localises to the mitochondrion. Component of the mitochondrial ribosome (mitoribosome), a dedicated translation machinery responsible for the synthesis of mitochondrial genome-encoded proteins, including at least some of the essential transmembrane subunits of the mitochondrial respiratory chain. The mitoribosomes are attached to the mitochondrial inner membrane and translation products are cotranslationally integrated into the membrane. The polypeptide is Large ribosomal subunit protein bL32m (mrpl32) (Schizosaccharomyces pombe (strain 972 / ATCC 24843) (Fission yeast)).